A 230-amino-acid chain; its full sequence is MTKESADNYYNPLMLWGYDVFVQVLTNSFWWRCSTKGILVPFFLDNSTTNHMEVGAGTGYFLRAKLDHERSKLKSSDDKTLWPQNLTLVDFHERCMNKAANRISPVRPNRVLANIMEPIPLKGQKFDSIAIMYVLHCIAATPEAKGRVFANLKPFLADEGTLFGSTVLGKGVKHNLIGGFLMWLYNYIGMFDNWDDGKEDFLKPLREHFEVVESEVVGTVLLFKAEKPRH.

It belongs to the methyltransferase superfamily.

It participates in polyketide biosynthesis. Functionally, methyltransferase; part of the gene cluster that mediates the biosynthesis of aurovertins, fungal polyketides that exhibit potent inhibition of adenosine triphosphate synthase. Tha biosynthesis starts with the HR-PKS aurA that selects propionate as the starter unit; synthesizes a hexa-ene chain through the repeated functions of the KR and DH domains in the first six iterations; selectively introduces three alpha-methyl substitutions at C4, C6, and C16 using the S-adensylmethionine-dependent cMET; and shuts off KR and DH in the last three iterations to afford a 1,3,5-triketo portion that can undergo intramolecular cyclization to yield the alpha-pyrone intermediate. AurE may act as a cyclase and enhances the rate of pyrone formation and product release of aurA. The methyltransferase aurB then methylates the C17 hydroxyl group. C17 methylation is required to initiate epoxidation by the downstream monooxygenase aurC. The monooxygenase aurC and the epoxide hydrolase aurD can iteratively transform the terminal triene portion of the methylated precursor into the dioxabicyclo[3.2.1]octane scaffold of aurovertin E. Epoxidation modifications of the precursor occur in two separate steps; bis-epoxidation of the two terminal olefins takes place first, followed by another epoxidation that occurs at C7-C8 after tetrahydrofuran formation. The O-acyltransferase aurG converts aurovertin E to aurovertin A. This chain is Methyltransferase aurB, found in Calcarisporium arbuscula (Dendryphion arbuscula).